We begin with the raw amino-acid sequence, 497 residues long: Probable cytosol aminopeptidase (497 aa).

2 residues coordinate Mn(2+): K267 and D272. K279 is an active-site residue. D290, D349, and E351 together coordinate Mn(2+). The active site involves R353.

This sequence belongs to the peptidase M17 family. Requires Mn(2+) as cofactor.

The protein localises to the cytoplasm. The catalysed reaction is Release of an N-terminal amino acid, Xaa-|-Yaa-, in which Xaa is preferably Leu, but may be other amino acids including Pro although not Arg or Lys, and Yaa may be Pro. Amino acid amides and methyl esters are also readily hydrolyzed, but rates on arylamides are exceedingly low.. It catalyses the reaction Release of an N-terminal amino acid, preferentially leucine, but not glutamic or aspartic acids.. In terms of biological role, presumably involved in the processing and regular turnover of intracellular proteins. Catalyzes the removal of unsubstituted N-terminal amino acids from various peptides. The sequence is that of Probable cytosol aminopeptidase from Nitrosomonas eutropha (strain DSM 101675 / C91 / Nm57).